Here is a 405-residue protein sequence, read N- to C-terminus: Nuclear RNA export factor 2 (405 aa).

Residues 1–33 (MRGQNRRGYRNIEGRLSLSSHSSHSSPRQTHVT) are disordered. Low complexity predominate over residues 16-26 (LSLSSHSSHSS). An RRM domain is found at 26–94 (SPRQTHVTNL…SVVLQHIGYK (69 aa)). 2 LRR repeats span residues 97 to 118 (RISG…SSLS) and 123 to 144 (FLKF…KKLG). The NTF2 domain maps to 215-382 (LVEEFIITYY…VAIVSDQLFI (168 aa)).

Belongs to the NXF family.

It localises to the nucleus. Functionally, involved in the export of cellular mRNA to the cytoplasm. Plays a role in the nuclear retention of unspliced mRNAs. The protein is Nuclear RNA export factor 2 of Caenorhabditis elegans.